The chain runs to 39 residues: Omega-theraphotoxin-Bs1b (39 aa).

Disulfide bonds link Cys4–Cys25, Cys8–Cys31, and Cys17–Cys36.

The protein belongs to the neurotoxin 12 (Hwtx-2) family. 06 (TXP1) subfamily. Expressed by the venom gland.

The protein resides in the secreted. Functionally, inhibits voltage-gated calcium channels (Cav) in rat cerebellar granule cells. Has insecticidal activity. The sequence is that of Omega-theraphotoxin-Bs1b from Brachypelma smithi (Mexican red knee tarantula).